The sequence spans 183 residues: Cell division protein SepF (183 aa).

A disordered region spans residues 13 to 58; the sequence is MHDDDDFDDDYEDYDDDFDEDYEDDKPSARKRLFTGSSKKDSVADE. The segment covering 16-36 has biased composition (acidic residues); it reads DDDFDDDYEDYDDDFDEDYED.

It belongs to the SepF family. Homodimer. Interacts with FtsZ.

The protein localises to the cytoplasm. Functionally, cell division protein that is part of the divisome complex and is recruited early to the Z-ring. Probably stimulates Z-ring formation, perhaps through the cross-linking of FtsZ protofilaments. Its function overlaps with FtsA. The sequence is that of Cell division protein SepF from Lachnospira eligens (strain ATCC 27750 / DSM 3376 / VPI C15-48 / C15-B4) (Eubacterium eligens).